Here is a 1405-residue protein sequence, read N- to C-terminus: DNA-directed RNA polymerase subunit beta' (1405 aa).

Zn(2+)-binding residues include Cys-70, Cys-72, Cys-85, and Cys-88. Positions 458, 460, and 462 each coordinate Mg(2+). Residues Cys-813, Cys-887, Cys-894, and Cys-897 each contribute to the Zn(2+) site.

The protein belongs to the RNA polymerase beta' chain family. In terms of assembly, the RNAP catalytic core consists of 2 alpha, 1 beta, 1 beta' and 1 omega subunit. When a sigma factor is associated with the core the holoenzyme is formed, which can initiate transcription. The cofactor is Mg(2+). Requires Zn(2+) as cofactor.

It catalyses the reaction RNA(n) + a ribonucleoside 5'-triphosphate = RNA(n+1) + diphosphate. In terms of biological role, DNA-dependent RNA polymerase catalyzes the transcription of DNA into RNA using the four ribonucleoside triphosphates as substrates. In Albidiferax ferrireducens (strain ATCC BAA-621 / DSM 15236 / T118) (Rhodoferax ferrireducens), this protein is DNA-directed RNA polymerase subunit beta'.